The chain runs to 142 residues: Hemoglobin subunit alpha (142 aa).

The Globin domain occupies 2–142; that stretch reads VLSPADKTNV…VSTVLTSKYR (141 aa). Ser4 is modified (phosphoserine). Lys8 is modified (N6-succinyllysine). Thr9 is modified (phosphothreonine). The residue at position 12 (Lys12) is an N6-succinyllysine. Lys17 carries the post-translational modification N6-acetyllysine; alternate. Lys17 is subject to N6-succinyllysine; alternate. Tyr25 carries the post-translational modification Phosphotyrosine. The residue at position 36 (Ser36) is a Phosphoserine. Lys41 bears the N6-succinyllysine mark. Ser50 bears the Phosphoserine mark. His59 serves as a coordination point for O2. Residue His88 participates in heme b binding. The residue at position 103 (Ser103) is a Phosphoserine. Position 109 is a phosphothreonine (Thr109). 2 positions are modified to phosphoserine: Ser125 and Ser132. Thr135 and Thr138 each carry phosphothreonine. A Phosphoserine modification is found at Ser139.

Belongs to the globin family. In terms of assembly, heterotetramer of two alpha chains and two beta chains in adult hemoglobin A (HbA); two alpha chains and two delta chains in adult hemoglobin A2 (HbA2); two alpha chains and two epsilon chains in early embryonic hemoglobin Gower-2; two alpha chains and two gamma chains in fetal hemoglobin F (HbF). In terms of tissue distribution, red blood cells.

In terms of biological role, involved in oxygen transport from the lung to the various peripheral tissues. Hemopressin acts as an antagonist peptide of the cannabinoid receptor CNR1. Hemopressin-binding efficiently blocks cannabinoid receptor CNR1 and subsequent signaling. The sequence is that of Hemoglobin subunit alpha (HBA1) from Pan paniscus (Pygmy chimpanzee).